Here is a 499-residue protein sequence, read N- to C-terminus: MYRTAASRAKALKGILNHNFRASRYASSSAVATSSSSSSWLSGGYSSSLPSMNIPLAGVSLPPPLSDHVEPSKLKTTTLPNGLTIATEMSPNPAASIGLYVDCGSIYETPQFRGATHLLERMAFKSTLNRSHFRLVREIEAIGGNTSASASREQMGYTIDALKTYVPEMVEVLIDSVRNPAFLDWEVNEELRKVKVEIGEFATNPMGFLLEAVHSAGYSGALANPLYAPESAITGLTGEVLENFVFENYTASRMVLAASGVDHEELLKVVEPLLSDLPNVPRPAEPKSQYVGGDFRQHTGGEATHFALAFEVPGWNNEKEAIIATVLQMLMGGGGSFSAGGPGKGMHSWLYLRLLNQHQQFQSCTAFTSVFNNTGLFGIYGCTSPEFASQGIELVASEMNAVADGKVNQKHLDRAKAATKSAILMNLESRMIAAEDIGRQILTYGERKPVDQFLKTVDQLTLKDIADFTSKVITKPLTMATFGDVLNVPSYDSVSKRFR.

The protein belongs to the peptidase M16 family. As to quaternary structure, heterodimer of alpha and beta subunits, forming the mitochondrial processing protease (MPP) in which subunit alpha is involved in substrate recognition and binding and subunit beta is the catalytic subunit. Component of the ubiquinol-cytochrome c oxidoreductase (cytochrome b-c1 complex, complex III, CIII), a multisubunit enzyme composed of 10 subunits. The complex is composed of 3 respiratory subunits cytochrome b (MT-CYB), cytochrome c1 (CYC1-1 or CYC1-2) and Rieske protein (UCR1-1 or UCR1-2), 2 core protein subunits MPPalpha1 (or MPPalpha2) and MPPB, and 5 low-molecular weight protein subunits QCR7-1 (or QCR7-2), UCRQ-1 (or UCRQ-2), QCR9, UCRY and probably QCR6-1 (or QCR6-2). The complex exists as an obligatory dimer and forms supercomplexes (SCs) in the inner mitochondrial membrane with NADH-ubiquinone oxidoreductase (complex I, CI), resulting in different assemblies (supercomplexes SCI(1)III(2) and SCI(2)III(4)). Interacts with TIM23-2.

It localises to the plastid. Its subcellular location is the chloroplast stroma. The protein resides in the mitochondrion matrix. It is found in the mitochondrion inner membrane. Its function is as follows. Substrate recognition and binding subunit of the essential mitochondrial processing protease (MPP), which cleaves the mitochondrial sequence off newly imported precursors proteins. Component of the ubiquinol-cytochrome c oxidoreductase, a multisubunit transmembrane complex that is part of the mitochondrial electron transport chain which drives oxidative phosphorylation. The respiratory chain contains 3 multisubunit complexes succinate dehydrogenase (complex II, CII), ubiquinol-cytochrome c oxidoreductase (cytochrome b-c1 complex, complex III, CIII) and cytochrome c oxidase (complex IV, CIV), that cooperate to transfer electrons derived from NADH and succinate to molecular oxygen, creating an electrochemical gradient over the inner membrane that drives transmembrane transport and the ATP synthase. The cytochrome b-c1 complex catalyzes electron transfer from ubiquinol to cytochrome c, linking this redox reaction to translocation of protons across the mitochondrial inner membrane, with protons being carried across the membrane as hydrogens on the quinol. In the process called Q cycle, 2 protons are consumed from the matrix, 4 protons are released into the intermembrane space and 2 electrons are passed to cytochrome c. The polypeptide is Probable mitochondrial-processing peptidase subunit alpha-2, chloroplastic/mitochondrial (MPPalpha2) (Arabidopsis thaliana (Mouse-ear cress)).